We begin with the raw amino-acid sequence, 291 residues long: Popeye domain-containing protein 3 (291 aa).

Asn-4 carries N-linked (GlcNAc...) asparagine glycosylation. The next 3 helical transmembrane spans lie at 27–44 (GAIY…FMGG), 48–70 (FGLL…WAWV), and 77–99 (IFSW…AYQV).

Belongs to the popeye family. As to expression, expressed in cardiac and skeletal muscle.

It localises to the membrane. Functionally, may play a role in the maintenance of heart function mediated, at least in part, through cAMP-binding. May play a role in the regulation of KCNK2-mediated current amplitude. The chain is Popeye domain-containing protein 3 (Popdc3) from Mus musculus (Mouse).